A 1537-amino-acid chain; its full sequence is Flocculation protein FLO1 (1537 aa).

The first 24 residues, 1–24 (MTMPHRYMFLAVFTLLALTSVASG), serve as a signal peptide directing secretion. Residues 74-249 (GGQTDISIDY…GTTVSDDFEG (176 aa)) form the PA14 domain. 2 N-linked (GlcNAc...) asparagine glycosylation sites follow: asparagine 135 and asparagine 187. Positions 197–240 (GGSLPPNIEGTVYMYAGYYYPMKVVYSNAVSWGTLPISVTLPDG) are sugar recognition. Residue asparagine 262 is glycosylated (N-linked (GlcNAc...) asparagine). A run of 18 repeats spans residues 278–322 (TTTE…STII), 323–367 (TTTE…TTAI), 368–412 (TTTE…TTAM), 413–457 (TTTQ…TTAM), 458–502 (TTTQ…TTAM), 503–547 (TTTQ…TTAM), 548–592 (TTPQ…TTAI), 593–637 (TTTE…TTAI), 638–682 (TTTQ…TTAM), 683–727 (TTTQ…TTAM), 728–772 (TTTQ…GLIS), 773–817 (TTTE…GLVT), 818–862 (TTTE…GLIS), 863–907 (TTTE…GLIS), 908–952 (TTTE…GLIS), 953–997 (TTTE…GLIS), 998–1042 (TTTE…GLVT), and 1043–1087 (TTTE…ISSS). An 18 X 45 AA approximate tandem repeats, Thr-rich region spans residues 278–1087 (TTTEPWTGTF…KTPTTAISSS (810 aa)). N-linked (GlcNAc...) asparagine glycans are attached at residues asparagine 329, asparagine 374, asparagine 419, asparagine 464, asparagine 509, asparagine 554, asparagine 599, asparagine 644, asparagine 689, and asparagine 734. Disordered stretches follow at residues 770–799 (LIST…NGQP) and 860–889 (LIST…NGQP). A compositionally biased stretch (low complexity) spans 773–795 (TTTEPWTGTFTSTSTEMTTVTGT). Residues 863 to 885 (TTTEPWTGTFTSTSTEMTTITGT) show a composition bias toward low complexity. The disordered stretch occupies residues 995 to 1024 (LISTTTEPWTGTFTSTSTEMTTVTGTNGQP). The span at 998 to 1020 (TTTEPWTGTFTSTSTEMTTVTGT) shows a compositional bias: low complexity. An N-linked (GlcNAc...) asparagine glycan is attached at asparagine 1114. A run of 2 repeats spans residues 1118 to 1137 (VISS…TSSP) and 1138 to 1157 (VISS…IFSE). The tract at residues 1118-1157 (VISSSVISSSVTSSLFTSSPVISSSVISSSTTTSTSIFSE) is 2 X 20 AA approximate tandem repeats, Ser/Thr-rich. Over residues 1161–1220 (SSVIPTSSSTSGSSESETSSAGSVSSSSFISSESSKSPTYSSSSLPLVTSATTSQETASS) the composition is skewed to low complexity. Positions 1161–1232 (SSVIPTSSST…PATTTKTSEQ (72 aa)) are disordered. The span at 1222–1232 (PPATTTKTSEQ) shows a compositional bias: polar residues. 6 consecutive repeat copies span residues 1226–1276 (TTKT…CPIS), 1291–1341 (TTET…CPIS), 1342–1392 (TTES…RPQT), 1408–1416 (ETTTNTLAA), 1417–1425 (ETTTNTVAA), and 1426–1434 (ETITNTGAA). Residues 1226–1392 (TTKTSEQTTL…TVYPTWRPQT (167 aa)) are 3 X 51 AA approximate repeats, Ser/Thr-rich. Residues 1392–1404 (TANEESVSSKMNS) show a composition bias toward polar residues. Residues 1392–1414 (TANEESVSSKMNSATGETTTNTL) are disordered. Residues 1405-1414 (ATGETTTNTL) show a composition bias toward low complexity. Residues 1408 to 1434 (ETTTNTLAAETTTNTVAAETITNTGAA) form a 3 X 9 AA approximate tandem repeats, Thr-rich region. A disordered region spans residues 1468 to 1497 (VSVSETGNTKSLTSSGLSTMSQQPRSTPAS). Residues 1472–1497 (ETGNTKSLTSSGLSTMSQQPRSTPAS) show a composition bias toward polar residues. Glycine 1514 carries the GPI-anchor amidated glycine lipid modification. The propeptide at 1515 to 1537 (SANSLLAGSGLSVFIASLLLAII) is removed in mature form.

This sequence belongs to the flocculin family. Post-translationally, extensively N- and O-glycosylated. In terms of processing, the GPI-anchor is attached to the protein in the endoplasmic reticulum and serves to target the protein to the cell surface. There, the glucosamine-inositol phospholipid moiety is cleaved off and the GPI-modified mannoprotein is covalently attached via its lipidless GPI glycan remnant to the 1,6-beta-glucan of the outer cell wall layer.

The protein resides in the cell membrane. Its subcellular location is the secreted. It localises to the cell wall. In terms of biological role, cell wall protein that participates directly in adhesive cell-cell interactions during yeast flocculation, a reversible, asexual and Ca(2+)-dependent process in which cells adhere to form aggregates (flocs) consisting of thousands of cells. The lectin-like protein sticks out of the cell wall of flocculent cells and selectively binds mannose residues in the cell walls of adjacent cells. Activity is inhibited by mannose, but not by glucose, maltose, sucrose or galactose. Also involved in cell-substrate adhesion. The sequence is that of Flocculation protein FLO1 (FLO1) from Saccharomyces cerevisiae (strain ATCC 204508 / S288c) (Baker's yeast).